The sequence spans 466 residues: Collagenase 3 (466 aa).

Residues Ala-1–Ser-13 form the signal peptide. Residues Leu-14 to Val-98 constitute a propeptide, activation peptide. The Cysteine switch motif lies at Pro-89–Val-96. A Zn(2+)-binding site is contributed by Cys-91. N-linked (GlcNAc...) asparagine glycosylation occurs at Asn-112. Residue Asp-123 participates in Ca(2+) binding. Asn-147 is a glycosylation site (N-linked (GlcNAc...) asparagine). A Ca(2+)-binding site is contributed by Asp-157. Zn(2+)-binding residues include His-167 and Asp-169. Positions Tyr-171–Tyr-241 are interaction with TIMP2. Ca(2+)-binding residues include Asp-174, Gly-175, Ser-177, and Leu-179. His-182 lines the Zn(2+) pocket. 3 residues coordinate Ca(2+): Asn-189, Gly-191, and Asp-193. His-195 provides a ligand contact to Zn(2+). The Ca(2+) site is built by Asp-197, Asp-198, and Glu-200. His-217 contributes to the Zn(2+) binding site. Glu-218 is an active-site residue. Residues His-221, His-227, and Met-235 each coordinate Zn(2+). The disordered stretch occupies residues Gln-258–Cys-279. Residues Pro-263–Cys-466 are interaction with collagen. Residues Pro-268–Cys-279 are compositionally biased toward basic and acidic residues. 4 Hemopexin repeats span residues Pro-276–Leu-325, Pro-326–Lys-372, Val-374–Ile-422, and Gly-423–Cys-466. Cysteines 279 and 466 form a disulfide. 4 residues coordinate Ca(2+): Asp-286, Ile-288, Asp-330, and Ala-332. At Tyr-361 the chain carries Phosphotyrosine; by PKDCC. Positions 378 and 380 each coordinate Ca(2+). The N-linked (GlcNAc...) asparagine glycan is linked to Asn-404. Asp-427 and Val-429 together coordinate Ca(2+).

Belongs to the peptidase M10A family. Requires Ca(2+) as cofactor. It depends on Zn(2+) as a cofactor. In terms of processing, the proenzyme is activated by removal of the propeptide; this cleavage can be effected by other matrix metalloproteinases, such as MMP2, MMP3 and MMP14 and may involve several cleavage steps. Cleavage can also be autocatalytic, after partial maturation by another protease or after treatment with 4-aminophenylmercuric acetate (APMA) (in vitro). Post-translationally, N-glycosylated. Tyrosine phosphorylated by PKDCC/VLK.

The protein localises to the secreted. It is found in the extracellular space. The protein resides in the extracellular matrix. Plays a role in the degradation of extracellular matrix proteins including fibrillar collagen, fibronectin, TNC and ACAN. Cleaves triple helical collagens, including type I, type II and type III collagen, but has the highest activity with soluble type II collagen. Can also degrade collagen type IV, type XIV and type X. May also function by activating or degrading key regulatory proteins, such as TGFB1 and CCN2. Plays a role in wound healing, tissue remodeling, cartilage degradation, bone development, bone mineralization and ossification. Required for normal embryonic bone development and ossification. Plays a role in the healing of bone fractures via endochondral ossification. Plays a role in wound healing, probably by a mechanism that involves proteolytic activation of TGFB1 and degradation of CCN2. Plays a role in keratinocyte migration during wound healing. May play a role in cell migration and in tumor cell invasion. The sequence is that of Collagenase 3 (Mmp13) from Rattus norvegicus (Rat).